We begin with the raw amino-acid sequence, 671 residues long: DNA ligase (671 aa).

NAD(+) contacts are provided by residues 32–36 (DAEYD), 81–82 (SL), and Glu113. Lys115 functions as the N6-AMP-lysine intermediate in the catalytic mechanism. NAD(+) contacts are provided by Arg136, Glu173, Lys290, and Lys314. Zn(2+)-binding residues include Cys408, Cys411, Cys426, and Cys432. The 79-residue stretch at 593–671 (EIDSPFAGKT…EAEMLRLLGS (79 aa)) folds into the BRCT domain.

This sequence belongs to the NAD-dependent DNA ligase family. LigA subfamily. Requires Mg(2+) as cofactor. Mn(2+) is required as a cofactor.

The catalysed reaction is NAD(+) + (deoxyribonucleotide)n-3'-hydroxyl + 5'-phospho-(deoxyribonucleotide)m = (deoxyribonucleotide)n+m + AMP + beta-nicotinamide D-nucleotide.. DNA ligase that catalyzes the formation of phosphodiester linkages between 5'-phosphoryl and 3'-hydroxyl groups in double-stranded DNA using NAD as a coenzyme and as the energy source for the reaction. It is essential for DNA replication and repair of damaged DNA. This chain is DNA ligase, found in Escherichia coli O9:H4 (strain HS).